A 377-amino-acid chain; its full sequence is Gap junction gamma-1 protein (377 aa).

The Cytoplasmic segment spans residues 1–18 (MSWSFLTRLLEEINNHST). A helical membrane pass occupies residues 19 to 39 (FVGKVWLTVLIIFRIVLTAVG). Over 40–75 (GESIYYDEQSKFTCNTQQPGCENVCYDAFAPLSHVR) the chain is Extracellular. Residues 76-96 (FWVFQIILITTPSIMYLGFAM) form a helical membrane-spanning segment. The Cytoplasmic portion of the chain corresponds to 97 to 174 (HRIARQPEMQ…RRIKQDGLMK (78 aa)). A disordered region spans residues 129-163 (DYEEAEDNQEEDPMICEEEEPEKDSEKGDKKKHDG). Residues 131 to 151 (EEAEDNQEEDPMICEEEEPEK) show a composition bias toward acidic residues. Residues 175–197 (VYVLQLLFRSVFEVGFLMGQYIL) traverse the membrane as a helical segment. Topologically, residues 198–228 (YGFEVIPFFVCSRKPCPHTVDCFVSRPTEKT) are extracellular. The helical transmembrane segment at 229 to 249 (IFLLIMYAVSALCLFLNLCEL) threads the bilayer. The Cytoplasmic segment spans residues 250–377 (FHLGIGGIRD…GVGNREKSGL (128 aa)). Disordered stretches follow at residues 265-294 (KKELQESRKKTPSAPPNYHSVLKKGRLPNG) and 334-377 (LNPT…KSGL). Polar residues predominate over residues 337–362 (TGDNTHASRSSSPESNSIAAEQNRLN).

The protein belongs to the connexin family. Gamma-type subfamily. A connexon is composed of a hexamer of connexins.

Its subcellular location is the cell membrane. The protein localises to the cell junction. The protein resides in the gap junction. One gap junction consists of a cluster of closely packed pairs of transmembrane channels, the connexons, through which materials of low MW diffuse from one cell to a neighboring cell. The sequence is that of Gap junction gamma-1 protein (gjc1) from Xenopus tropicalis (Western clawed frog).